The following is a 664-amino-acid chain: MTAQSNITPESIVADLRYLQLLSRSFPTIAAASTEIINLEAILNLPKGTEHFLTDIHGEYEAFQHVLKNASGAVKRKVNEIFGHTLREIEKKELCTLIYYPEEKLQLIKATETDIDDWYLITLNQLVKVCQNVSSKYTRSKVRKSLPAEFSYIIQELLHESTIEPNKHAYINVIISTIISTRRADDFIIAMCNLIQRLTIDSLHIVGDIYDRGPGAHIIMDTLCDYHNFDIQWGNHDILWMGAASGNEACMANVIRLSMRYGNLGTLEDGYGINLLPLATFAMDTYADDPCTIFAPKTNFADSTYNEKTLRLITQMHKAITIIQFKLEANIINRRPEFGMGGRKLLEKIDFERGVFVYEGKEYPLRDTNFPTVDPADPYRLTDEEQELIEKIHYSFMNSEKLKKHMRCLFTYGGMYLVCNSNLLYHASVPLNEDGSFKHVNICGKEYWGKNLLDKIDQLIRTAYFDEDDEEEKRFAMDYIWYLWCGPDAPSFDKDKMATFERYFIADKSLHKETKGYYYALRNKEEICDRILEEFGVTGQHTHIINGHVPVKTIKGEQPMKAGGKLLVIDGGFSKAYQPETGIAGYTLVYHSHGLQLVQHDPFQSTQKAIEEGQDIKSTTFVIEFNSQRMMVKDTDKGKELVTQILDLKKLLVAYRIGLIKEKV.

This sequence belongs to the FBPase class 3 family. Mn(2+) serves as cofactor.

The catalysed reaction is beta-D-fructose 1,6-bisphosphate + H2O = beta-D-fructose 6-phosphate + phosphate. The protein operates within carbohydrate biosynthesis; gluconeogenesis. In Bacteroides fragilis (strain YCH46), this protein is Fructose-1,6-bisphosphatase class 3.